Reading from the N-terminus, the 350-residue chain is Dihydroorotate dehydrogenase (quinone) (350 aa).

Residues 61–65 (AGLDK) and Thr-85 each bind FMN. Lys-65 provides a ligand contact to substrate. 110–114 (NRMGF) contributes to the substrate binding site. Residues Asn-139 and Asn-172 each contribute to the FMN site. Asn-172 provides a ligand contact to substrate. Residue Ser-175 is the Nucleophile of the active site. Asn-177 lines the substrate pocket. FMN contacts are provided by Lys-217 and Thr-245. 246–247 (NT) provides a ligand contact to substrate. FMN is bound by residues Gly-268, Gly-297, and 318–319 (YS).

Belongs to the dihydroorotate dehydrogenase family. Type 2 subfamily. Monomer. The cofactor is FMN.

The protein localises to the cell membrane. The catalysed reaction is (S)-dihydroorotate + a quinone = orotate + a quinol. It functions in the pathway pyrimidine metabolism; UMP biosynthesis via de novo pathway; orotate from (S)-dihydroorotate (quinone route): step 1/1. Functionally, catalyzes the conversion of dihydroorotate to orotate with quinone as electron acceptor. This is Dihydroorotate dehydrogenase (quinone) from Flavobacterium lutescens.